The primary structure comprises 200 residues: Charged multivesicular body protein 6-B (200 aa).

The N-myristoyl glycine moiety is linked to residue G2. Positions 9-102 form a coiled coil; sequence RRSRVTEQDK…FAQIEMKVIE (94 aa). Residues 165–200 are disordered; the sequence is QEDLELPEAPSEPLSDTVPEKQAVKNRPKPQLVAAS. The Type-2 MIT-interacting motif motif lies at 168–179; the sequence is LELPEAPSEPLS.

This sequence belongs to the SNF7 family. Probable core component of the endosomal sorting required for transport complex III (ESCRT-III). ESCRT-III components are thought to multimerize to form a flat lattice on the perimeter membrane of the endosome.

It localises to the endomembrane system. Its subcellular location is the late endosome membrane. Functionally, probable core component of the endosomal sorting required for transport complex III (ESCRT-III) which is involved in multivesicular bodies (MVBs) formation and sorting of endosomal cargo proteins into MVBs. MVBs contain intraluminal vesicles (ILVs) that are generated by invagination and scission from the limiting membrane of the endosome and mostly are delivered to lysosomes enabling degradation of membrane proteins, such as stimulated growth factor receptors, lysosomal enzymes and lipids. In the ESCRT-III complex, it probably serves as an acceptor for the ESCRT-II complex on endosomal membranes. In Xenopus laevis (African clawed frog), this protein is Charged multivesicular body protein 6-B (chmp6-b).